We begin with the raw amino-acid sequence, 229 residues long: Peptidase E (229 aa).

Catalysis depends on charge relay system residues Ser-120, Asp-135, and His-157.

The protein belongs to the peptidase S51 family.

The protein resides in the cytoplasm. It catalyses the reaction Dipeptidase E catalyzes the hydrolysis of dipeptides Asp-|-Xaa. It does not act on peptides with N-terminal Glu, Asn or Gln, nor does it cleave isoaspartyl peptides.. Hydrolyzes dipeptides containing N-terminal aspartate residues. May play a role in allowing the cell to use peptide aspartate to spare carbon otherwise required for the synthesis of the aspartate family of amino acids. The polypeptide is Peptidase E (Shigella sonnei (strain Ss046)).